Consider the following 139-residue polypeptide: ATP synthase epsilon chain, chloroplastic (139 aa).

This sequence belongs to the ATPase epsilon chain family. In terms of assembly, F-type ATPases have 2 components, CF(1) - the catalytic core - and CF(0) - the membrane proton channel. CF(1) has five subunits: alpha(3), beta(3), gamma(1), delta(1), epsilon(1). CF(0) has three main subunits: a, b and c.

It is found in the plastid. The protein localises to the chloroplast thylakoid membrane. Its function is as follows. Produces ATP from ADP in the presence of a proton gradient across the membrane. The polypeptide is ATP synthase epsilon chain, chloroplastic (Welwitschia mirabilis (Tree tumbo)).